Here is a 491-residue protein sequence, read N- to C-terminus: Neuronal acetylcholine receptor subunit beta-2 (491 aa).

Residues M1–C18 form the signal peptide. Residues T19–K226 lie on the Extracellular side of the membrane. Residues N44 and N161 are each glycosylated (N-linked (GlcNAc...) asparagine). A disulfide bridge links C148 with C162. A helical membrane pass occupies residues P227–L251. The Cytoplasmic portion of the chain corresponds to P252 to K258. The chain crosses the membrane as a helical span at residues M259–S277. The Extracellular segment spans residues K278–K292. A helical membrane pass occupies residues Y293 to V314. The Cytoplasmic segment spans residues H315–R449. A helical membrane pass occupies residues L450 to L468.

It belongs to the ligand-gated ion channel (TC 1.A.9) family. Acetylcholine receptor (TC 1.A.9.1) subfamily. Beta-2/CHRNB2 sub-subfamily. Neuronal AChR is a heteropentamer composed of two different types of subunits: alpha and beta. CHRNB2/Beta-2 subunit can be combined to CHRNA2/alpha-2, CHRNA3/alpha-3 or CHRNA4/alpha-4, CHRNA5/alpha-5, CHRNA6/alpha-6 and CHRNB3/beta-3 to give rise to functional receptors.

It localises to the synaptic cell membrane. The protein localises to the cell membrane. The catalysed reaction is Ca(2+)(in) = Ca(2+)(out). The enzyme catalyses K(+)(in) = K(+)(out). It carries out the reaction Na(+)(in) = Na(+)(out). With respect to regulation, activated by a myriad of ligands such as acetylcholine, cytisine, nicotine, choline and epibatidine. nAChR activity is inhibited by the antagonist alpha-conotoxins BuIA, PnIA, PnIC, GID and MII, small disulfide-constrained peptides from cone snails. In terms of biological role, component of neuronal acetylcholine receptors (nAChRs) that function as pentameric, ligand-gated cation channels with high calcium permeability among other activities. nAChRs are excitatory neurotrasnmitter receptors formed by a collection of nAChR subunits known to mediate synaptic transmission in the nervous system and the neuromuscular junction. Each nAchR subunit confers differential attributes to channel properties, including activation, deactivation and desensitization kinetics, pH sensitivity, cation permeability, and binding to allosteric modulators. CHRNB2 forms heteropentameric neuronal acetylcholine receptors with CHRNA2, CHRNA3, CHRNA4 and CHRNA6, as well as CHRNA5 and CHRNB3 as accesory subunits. The sequence is that of Neuronal acetylcholine receptor subunit beta-2 (CHRNB2) from Gallus gallus (Chicken).